A 466-amino-acid polypeptide reads, in one-letter code: MMSPNGSLKFASQAVAKPYFVFALILFVGQILFGLIMGLQYVVGDFLFPAIPFNVARMVHTNLLIVWLLFGFMGAAYYLVPEESDCELYSPKLAWILFWVFAAAGVLTILGYLLVPYAGLARLTGNELWPTMGREFLEQPTISKAGIVIVALGFLFNVGMTVLRGRKTAISMVLMTGLIGLALLFLFSFYNPENLTRDKFYWWWVVHLWVEGVWELIMGAILAFVLVKITGVDREVIEKWLYVIIAMALISGIIGTGHHYFWIGVPGYWLWLGSVFSALEPLPFFAMVLFAFNTINRRRRRDYPNRAVALWAMGTTVMAFLGAGVWGFMHTLAPVNYYTHGTQLTAAHGHMAFYGAYAMIVMTIISYAMPRLRGIGEAMDNRSQVLEMWGFWLMTVAMVFITLFLSAAGVLQVWLQRMPADGAAMTFMATQDQLAIFYWLREGAGVVFLIGLVAYLLSFRRGKAAA.

The chain crosses the membrane as a helical span at residues 19–39 (YFVFALILFVGQILFGLIMGL). Residue H60 coordinates heme b. 8 helical membrane passes run 61–81 (TNLL…YLVP), 95–115 (WILF…YLLV), 142–162 (ISKA…GMTV), 169–189 (AISM…LFSF), 205–225 (VVHL…LAFV), 243–263 (VIIA…YFWI), 270–290 (LWLG…MVLF), and 308–328 (VALW…VWGF). Positions 207, 258, and 259 each coordinate Fe cation. Heme b is bound by residues H348 and H350. 3 helical membrane passes run 349–369 (GHMA…SYAM), 391–411 (FWLM…AGVL), and 434–454 (LAIF…GLVA).

This sequence belongs to the heme-copper respiratory oxidase family. Heterodimer of cytochromes b (large subunit) and c (small subunit).

It localises to the cell membrane. The enzyme catalyses nitrous oxide + 2 Fe(III)-[cytochrome c] + H2O = 2 nitric oxide + 2 Fe(II)-[cytochrome c] + 2 H(+). The protein operates within nitrogen metabolism; nitrate reduction (denitrification); dinitrogen from nitrate: step 3/4. Its function is as follows. Component of the anaerobic respiratory chain that transforms nitrate to dinitrogen (denitrification). NorB is the catalytic subunit of the enzyme complex. Shows proton pump activity across the membrane in denitrifying bacterial cells. The mononitrogen reduction is probably coupled to electron transport phosphorylation. The chain is Nitric oxide reductase subunit B (norB) from Pseudomonas aeruginosa (strain ATCC 15692 / DSM 22644 / CIP 104116 / JCM 14847 / LMG 12228 / 1C / PRS 101 / PAO1).